The primary structure comprises 205 residues: Adenylyl-sulfate kinase (205 aa).

31–38 (GLSGAGKS) is a binding site for ATP. The active-site Phosphoserine intermediate is serine 105.

It belongs to the APS kinase family.

It catalyses the reaction adenosine 5'-phosphosulfate + ATP = 3'-phosphoadenylyl sulfate + ADP + H(+). Its pathway is sulfur metabolism; hydrogen sulfide biosynthesis; sulfite from sulfate: step 2/3. In terms of biological role, catalyzes the synthesis of activated sulfate. This chain is Adenylyl-sulfate kinase, found in Shewanella putrefaciens (strain CN-32 / ATCC BAA-453).